The primary structure comprises 303 residues: Dihydroorotate dehydrogenase B (NAD(+)), catalytic subunit (303 aa).

Residues S23 and 47 to 48 (KS) contribute to the FMN site. Residues K47, 71–75 (NAMGL), and N125 each bind substrate. An FMN-binding site is contributed by N125. C128 functions as the Nucleophile in the catalytic mechanism. Positions 163 and 189 each coordinate FMN. Position 190–191 (190–191 (NT)) interacts with substrate. Residues G215, 241-242 (GG), and 263-264 (GT) contribute to the FMN site.

The protein belongs to the dihydroorotate dehydrogenase family. Type 1 subfamily. In terms of assembly, heterotetramer of 2 PyrK and 2 PyrD type B subunits. FMN is required as a cofactor.

The protein localises to the cytoplasm. The catalysed reaction is (S)-dihydroorotate + NAD(+) = orotate + NADH + H(+). It functions in the pathway pyrimidine metabolism; UMP biosynthesis via de novo pathway; orotate from (S)-dihydroorotate (NAD(+) route): step 1/1. Functionally, catalyzes the conversion of dihydroorotate to orotate with NAD(+) as electron acceptor. The sequence is that of Dihydroorotate dehydrogenase B (NAD(+)), catalytic subunit (pyrD) from Pyrococcus horikoshii (strain ATCC 700860 / DSM 12428 / JCM 9974 / NBRC 100139 / OT-3).